A 103-amino-acid chain; its full sequence is Phosphoribosyl-ATP pyrophosphatase (103 aa).

It belongs to the PRA-PH family.

Its subcellular location is the cytoplasm. It carries out the reaction 1-(5-phospho-beta-D-ribosyl)-ATP + H2O = 1-(5-phospho-beta-D-ribosyl)-5'-AMP + diphosphate + H(+). The protein operates within amino-acid biosynthesis; L-histidine biosynthesis; L-histidine from 5-phospho-alpha-D-ribose 1-diphosphate: step 2/9. The sequence is that of Phosphoribosyl-ATP pyrophosphatase from Cereibacter sphaeroides (strain ATCC 17029 / ATH 2.4.9) (Rhodobacter sphaeroides).